A 184-amino-acid chain; its full sequence is MYLLVNFIVALAVLQVQAGSSYIPDSDRNTRTLQNDLQVERDGKYRYAYETSNGISASQEGLGGVAVQGGSSYTSPEGEVISVNYVADEFGYHPVGAHIPQVPDYILRSLEYIRTHPYQIKDYYTGELKTVEHDAAAFNVYTRNIQDHTIPQSRPSTTPKTIYLTHPPTTTSRPLRQRRALPTH.

An N-terminal signal peptide occupies residues 1–15 (MYLLVNFIVALAVLQ). One can recognise a Chitin-binding type R&amp;R domain in the interval 42–103 (DGKYRYAYET…PVGAHIPQVP (62 aa)). A compositionally biased stretch (polar residues) spans 147 to 160 (DHTIPQSRPSTTPK). The interval 147-184 (DHTIPQSRPSTTPKTIYLTHPPTTTSRPLRQRRALPTH) is disordered. The segment covering 175-184 (LRQRRALPTH) has biased composition (basic residues).

Functionally, component of the cuticle of the pupa of fruit fly. The chain is Pupal cuticle protein (Pcp) from Drosophila melanogaster (Fruit fly).